Consider the following 608-residue polypeptide: Probable methyltransferase PMT3 (608 aa).

At 1-12 (MKGRSDGGQKKR) the chain is on the cytoplasmic side. The helical; Signal-anchor for type II membrane protein transmembrane segment at 13-33 (VIALVCVAAVVLVFVYLFYGS) threads the bilayer. Residues 34 to 608 (SDHRASAIEY…LTSESLRDME (575 aa)) lie on the Lumenal side of the membrane. Asparagine 342 carries N-linked (GlcNAc...) asparagine glycosylation.

The protein belongs to the methyltransferase superfamily.

It is found in the golgi apparatus membrane. The sequence is that of Probable methyltransferase PMT3 from Arabidopsis thaliana (Mouse-ear cress).